Reading from the N-terminus, the 140-residue chain is Ribosome-binding factor A (140 aa).

Residues 118–133 (DEAKQQKHNGKDKTDT) are compositionally biased toward basic and acidic residues. The segment at 118–140 (DEAKQQKHNGKDKTDTADSEGEE) is disordered.

The protein belongs to the RbfA family. As to quaternary structure, monomer. Binds 30S ribosomal subunits, but not 50S ribosomal subunits or 70S ribosomes.

The protein localises to the cytoplasm. Functionally, one of several proteins that assist in the late maturation steps of the functional core of the 30S ribosomal subunit. Associates with free 30S ribosomal subunits (but not with 30S subunits that are part of 70S ribosomes or polysomes). Required for efficient processing of 16S rRNA. May interact with the 5'-terminal helix region of 16S rRNA. In Shewanella woodyi (strain ATCC 51908 / MS32), this protein is Ribosome-binding factor A.